Here is a 710-residue protein sequence, read N- to C-terminus: Prolyl endopeptidase (710 aa).

Met-1 carries the post-translational modification N-acetylmethionine. Residue Lys-157 is modified to N6-acetyllysine. Active-site charge relay system residues include Ser-554, Asp-641, and His-680.

The protein belongs to the peptidase S9A family.

Its subcellular location is the cytoplasm. The enzyme catalyses Hydrolysis of Pro-|-Xaa &gt;&gt; Ala-|-Xaa in oligopeptides.. In terms of biological role, cleaves peptide bonds on the C-terminal side of prolyl residues within peptides that are up to approximately 30 amino acids long. In Mus musculus (Mouse), this protein is Prolyl endopeptidase (Prep).